We begin with the raw amino-acid sequence, 252 residues long: Uridylate kinase (252 aa).

23–26 (KLSG) is an ATP binding site. Gly-65 is a binding site for UMP. Residues Gly-66 and Arg-70 each coordinate ATP. Residues Asp-85 and 146 to 153 (LGAPFFST) each bind UMP. ATP-binding residues include Thr-173, Gln-174, Tyr-179, and Asp-182.

Belongs to the UMP kinase family. As to quaternary structure, homohexamer.

It localises to the cytoplasm. It catalyses the reaction UMP + ATP = UDP + ADP. Its pathway is pyrimidine metabolism; CTP biosynthesis via de novo pathway; UDP from UMP (UMPK route): step 1/1. Its activity is regulated as follows. Inhibited by UTP. Catalyzes the reversible phosphorylation of UMP to UDP. This Thermobifida fusca (strain YX) protein is Uridylate kinase.